The following is a 131-amino-acid chain: Probable ATP synthase subunit g 2, mitochondrial (131 aa).

It belongs to the ATPase g subunit family. Subunit of the F-type ATPase which has 2 components, CF(1) - the catalytic core - and CF(0) - the membrane proton channel.

The protein localises to the mitochondrion membrane. Mitochondrial membrane ATP synthase (F(1)F(0) ATP synthase or Complex V) produces ATP from ADP in the presence of a proton gradient across the membrane which is generated by electron transport complexes of the respiratory chain. F-type ATPases consist of two structural domains, F(1) - containing the extramembraneous catalytic core, and F(0) - containing the membrane proton channel, linked together by a central stalk and a peripheral stalk. During catalysis, ATP synthesis in the catalytic domain of F(1) is coupled via a rotary mechanism of the central stalk subunits to proton translocation. Part of the complex F(0) domain. Minor subunit located with subunit a in the membrane. This Caenorhabditis elegans protein is Probable ATP synthase subunit g 2, mitochondrial.